The sequence spans 240 residues: UDP-2,3-diacylglucosamine hydrolase (240 aa).

The Mn(2+) site is built by aspartate 7, histidine 9, aspartate 40, asparagine 78, and histidine 113. Residue asparagine 78–arginine 79 coordinates substrate. Substrate-binding residues include aspartate 121, serine 159, threonine 163, lysine 166, and histidine 194. The Mn(2+) site is built by histidine 194 and histidine 196.

The protein belongs to the LpxH family. Requires Mn(2+) as cofactor.

It is found in the cell inner membrane. It carries out the reaction UDP-2-N,3-O-bis[(3R)-3-hydroxytetradecanoyl]-alpha-D-glucosamine + H2O = 2-N,3-O-bis[(3R)-3-hydroxytetradecanoyl]-alpha-D-glucosaminyl 1-phosphate + UMP + 2 H(+). It functions in the pathway glycolipid biosynthesis; lipid IV(A) biosynthesis; lipid IV(A) from (3R)-3-hydroxytetradecanoyl-[acyl-carrier-protein] and UDP-N-acetyl-alpha-D-glucosamine: step 4/6. In terms of biological role, hydrolyzes the pyrophosphate bond of UDP-2,3-diacylglucosamine to yield 2,3-diacylglucosamine 1-phosphate (lipid X) and UMP by catalyzing the attack of water at the alpha-P atom. Involved in the biosynthesis of lipid A, a phosphorylated glycolipid that anchors the lipopolysaccharide to the outer membrane of the cell. This Pseudomonas entomophila (strain L48) protein is UDP-2,3-diacylglucosamine hydrolase.